A 356-amino-acid chain; its full sequence is S-adenosylmethionine:tRNA ribosyltransferase-isomerase (356 aa).

The protein belongs to the QueA family. As to quaternary structure, monomer.

It is found in the cytoplasm. The enzyme catalyses 7-aminomethyl-7-carbaguanosine(34) in tRNA + S-adenosyl-L-methionine = epoxyqueuosine(34) in tRNA + adenine + L-methionine + 2 H(+). The protein operates within tRNA modification; tRNA-queuosine biosynthesis. Its function is as follows. Transfers and isomerizes the ribose moiety from AdoMet to the 7-aminomethyl group of 7-deazaguanine (preQ1-tRNA) to give epoxyqueuosine (oQ-tRNA). In Xanthomonas axonopodis pv. citri (strain 306), this protein is S-adenosylmethionine:tRNA ribosyltransferase-isomerase.